A 422-amino-acid polypeptide reads, in one-letter code: WD repeat and SOCS box-containing protein 1 (422 aa).

WD repeat units follow at residues 124–165 (SRCV…LLLN), 168–208 (DHTE…NMMK), 212–251 (GHQN…MIRK), 254–293 (GHYN…ILFE), and 309–346 (DNGR…SYPV). The SOCS box domain occupies 374–422 (NAYFWSTPKYVSSLQHLCRMAIRRVMNTNEVKKLPIPQKIMEFLTYQTM).

Component of a probable ECS E3 ubiquitin-protein ligase complex that contains the Elongin BC complex.

It participates in protein modification; protein ubiquitination. Probable substrate-recognition component of a SCF-like ECS (Elongin-Cullin-SOCS-box protein) E3 ubiquitin-protein ligase complex which mediates the ubiquitination and subsequent proteasomal degradation of target proteins. The chain is WD repeat and SOCS box-containing protein 1 (wsb1) from Xenopus tropicalis (Western clawed frog).